A 262-amino-acid chain; its full sequence is Snake venom serine proteinase 9 (262 aa).

Residues Met-1 to Ala-18 form the signal peptide. Positions Gln-19–Leu-24 are excised as a propeptide. One can recognise a Peptidase S1 domain in the interval Val-25–Ala-253. 5 cysteine pairs are disulfide-bonded: Cys-31/Cys-165, Cys-52/Cys-68, Cys-144/Cys-214, Cys-176/Cys-193, and Cys-204/Cys-229. Catalysis depends on His-67, which acts as the Charge relay system. Asn-105 carries N-linked (GlcNAc...) asparagine glycosylation. Asp-112 functions as the Charge relay system in the catalytic mechanism. Ser-208 functions as the Charge relay system in the catalytic mechanism.

This sequence belongs to the peptidase S1 family. Snake venom subfamily. As to quaternary structure, monomer. Expressed by the venom gland.

Its subcellular location is the secreted. Snake venom serine protease that may act in the hemostasis system of the prey. The sequence is that of Snake venom serine proteinase 9 from Crotalus adamanteus (Eastern diamondback rattlesnake).